We begin with the raw amino-acid sequence, 344 residues long: Chalcone synthase A (344 aa).

Residue cysteine 167 is part of the active site.

Belongs to the thiolase-like superfamily. Chalcone/stilbene synthases family.

It catalyses the reaction (E)-4-coumaroyl-CoA + 3 malonyl-CoA + 3 H(+) = 2',4,4',6'-tetrahydroxychalcone + 3 CO2 + 4 CoA. The protein operates within secondary metabolite biosynthesis; flavonoid biosynthesis. Its function is as follows. The primary product of this enzyme is 4,2',4',6'-tetrahydroxychalcone (also termed naringenin-chalcone or chalcone) which can under specific conditions spontaneously isomerize into naringenin. This Ipomoea nil (Japanese morning glory) protein is Chalcone synthase A (CHSA).